The following is a 382-amino-acid chain: Na(+)/H(+) antiporter NhaA (382 aa).

The next 11 helical transmembrane spans lie at 14–34 (AGGI…NSSF), 49–69 (MSVS…LIGL), 87–107 (IFPA…YVAF), 117–137 (GWAI…ALLG), 146–166 (VFLL…IAFF), 171–191 (LSVL…LLNS), 205–225 (FILW…GVVL), 247–267 (ALHP…NAGI), 285–305 (VALG…YVAV), 321–341 (IFAV…ISSL), and 356–376 (LGIL…LHIS).

It belongs to the NhaA Na(+)/H(+) (TC 2.A.33) antiporter family.

The protein resides in the cell inner membrane. It carries out the reaction Na(+)(in) + 2 H(+)(out) = Na(+)(out) + 2 H(+)(in). Na(+)/H(+) antiporter that extrudes sodium in exchange for external protons. The sequence is that of Na(+)/H(+) antiporter NhaA from Aliivibrio salmonicida (strain LFI1238) (Vibrio salmonicida (strain LFI1238)).